Reading from the N-terminus, the 82-residue chain is MSSINYPFVTEKAMMLLDENKLQFIVDTRSNKKQIVEDVEKLYGFKVKAVRTMTTMKGTKKAVLAFEEPEAAHEIATRIGLM.

Belongs to the universal ribosomal protein uL23 family. In terms of assembly, part of the 50S ribosomal subunit. Contacts protein L29.

Its function is as follows. Binds to 23S rRNA. One of the proteins that surrounds the polypeptide exit tunnel on the outside of the ribosome. In Methanosarcina mazei (strain ATCC BAA-159 / DSM 3647 / Goe1 / Go1 / JCM 11833 / OCM 88) (Methanosarcina frisia), this protein is Large ribosomal subunit protein uL23.